We begin with the raw amino-acid sequence, 194 residues long: Holliday junction branch migration complex subunit RuvA (194 aa).

The segment at 1 to 64 (MIARLSGILV…EDAQLLYGFG (64 aa)) is domain I. A domain II region spans residues 65–141 (SDQERATFRQ…FAIDGGTALA (77 aa)). The flexible linker stretch occupies residues 141-144 (AGSN). The tract at residues 145 to 194 (PAKSASSDVLNALLALGYNEREALAAVKQLPADIAVAEGIKLSLKSLSKT) is domain III.

It belongs to the RuvA family. As to quaternary structure, homotetramer. Forms an RuvA(8)-RuvB(12)-Holliday junction (HJ) complex. HJ DNA is sandwiched between 2 RuvA tetramers; dsDNA enters through RuvA and exits via RuvB. An RuvB hexamer assembles on each DNA strand where it exits the tetramer. Each RuvB hexamer is contacted by two RuvA subunits (via domain III) on 2 adjacent RuvB subunits; this complex drives branch migration. In the full resolvosome a probable DNA-RuvA(4)-RuvB(12)-RuvC(2) complex forms which resolves the HJ.

The protein resides in the cytoplasm. In terms of biological role, the RuvA-RuvB-RuvC complex processes Holliday junction (HJ) DNA during genetic recombination and DNA repair, while the RuvA-RuvB complex plays an important role in the rescue of blocked DNA replication forks via replication fork reversal (RFR). RuvA specifically binds to HJ cruciform DNA, conferring on it an open structure. The RuvB hexamer acts as an ATP-dependent pump, pulling dsDNA into and through the RuvAB complex. HJ branch migration allows RuvC to scan DNA until it finds its consensus sequence, where it cleaves and resolves the cruciform DNA. The sequence is that of Holliday junction branch migration complex subunit RuvA from Methylobacillus flagellatus (strain ATCC 51484 / DSM 6875 / VKM B-1610 / KT).